Reading from the N-terminus, the 393-residue chain is Acetate kinase (393 aa).

Asn7 is a Mg(2+) binding site. Position 14 (Lys14) interacts with ATP. Residue Arg89 coordinates substrate. The Proton donor/acceptor role is filled by Asp146. ATP-binding positions include 204-208 (HIGNG), 279-281 (DSR), and 327-331 (GIGEN). Glu379 lines the Mg(2+) pocket.

It belongs to the acetokinase family. Homodimer. Mg(2+) is required as a cofactor. Requires Mn(2+) as cofactor.

The protein resides in the cytoplasm. It carries out the reaction acetate + ATP = acetyl phosphate + ADP. The protein operates within metabolic intermediate biosynthesis; acetyl-CoA biosynthesis; acetyl-CoA from acetate: step 1/2. Its function is as follows. Catalyzes the formation of acetyl phosphate from acetate and ATP. Can also catalyze the reverse reaction. The sequence is that of Acetate kinase from Acholeplasma laidlawii (strain PG-8A).